The sequence spans 306 residues: Pantothenate kinase (306 aa).

ATP is bound at residue 90-97 (GSVAVGKS).

This sequence belongs to the prokaryotic pantothenate kinase family.

It is found in the cytoplasm. It catalyses the reaction (R)-pantothenate + ATP = (R)-4'-phosphopantothenate + ADP + H(+). Its pathway is cofactor biosynthesis; coenzyme A biosynthesis; CoA from (R)-pantothenate: step 1/5. This chain is Pantothenate kinase, found in Lactococcus lactis subsp. cremoris (strain SK11).